The sequence spans 462 residues: ATP synthase subunit beta (462 aa).

Residue 151–158 (GGAGVGKT) participates in ATP binding.

The protein belongs to the ATPase alpha/beta chains family. In terms of assembly, F-type ATPases have 2 components, CF(1) - the catalytic core - and CF(0) - the membrane proton channel. CF(1) has five subunits: alpha(3), beta(3), gamma(1), delta(1), epsilon(1). CF(0) has four main subunits: a(1), b(1), b'(1) and c(9-12).

It localises to the cell inner membrane. It catalyses the reaction ATP + H2O + 4 H(+)(in) = ADP + phosphate + 5 H(+)(out). Functionally, produces ATP from ADP in the presence of a proton gradient across the membrane. The catalytic sites are hosted primarily by the beta subunits. The sequence is that of ATP synthase subunit beta from Chlorobium limicola (strain DSM 245 / NBRC 103803 / 6330).